The following is a 191-amino-acid chain: GTP-binding protein CIN4 (191 aa).

Residues 23 to 30, 69 to 73, and 131 to 134 each bind GTP; these read GLDNSGKS, DIGGQ, and NKID.

Its function is as follows. Implicated in yeast microtubule function. The protein is GTP-binding protein CIN4 (CIN4) of Saccharomyces cerevisiae (strain ATCC 204508 / S288c) (Baker's yeast).